A 940-amino-acid polypeptide reads, in one-letter code: Isoleucine--tRNA ligase (940 aa).

Residues 58–68 (PYANGSIHIGH) carry the 'HIGH' region motif. L-isoleucyl-5'-AMP is bound at residue Glu-564. Positions 605–609 (KMSKS) match the 'KMSKS' region motif. Position 608 (Lys-608) interacts with ATP. Zn(2+)-binding residues include Cys-903, Cys-906, Cys-923, and Cys-926.

The protein belongs to the class-I aminoacyl-tRNA synthetase family. IleS type 1 subfamily. Monomer. The cofactor is Zn(2+).

It is found in the cytoplasm. The enzyme catalyses tRNA(Ile) + L-isoleucine + ATP = L-isoleucyl-tRNA(Ile) + AMP + diphosphate. In terms of biological role, catalyzes the attachment of isoleucine to tRNA(Ile). As IleRS can inadvertently accommodate and process structurally similar amino acids such as valine, to avoid such errors it has two additional distinct tRNA(Ile)-dependent editing activities. One activity is designated as 'pretransfer' editing and involves the hydrolysis of activated Val-AMP. The other activity is designated 'posttransfer' editing and involves deacylation of mischarged Val-tRNA(Ile). This chain is Isoleucine--tRNA ligase, found in Shewanella sp. (strain MR-4).